The sequence spans 114 residues: Protein ORF3 (114 aa).

Hydrophobic stretches follow at residues 6-22 and 33-53; these read CDLG…CLCC and AVVG…GLIL. Residues 28–68 are interaction with host HPX; it reads VSRLAAVVGGAAAVPAVVSGVTGLILSPSQSPIFIQPTPSP. Residues 48-72 form an interaction with the capsid protein region; that stretch reads VTGLILSPSQSPIFIQPTPSPPMSP. Ser-71 is subject to Phosphoserine; by host. Residues 72 to 114 form a homodimerization, and interaction with host AMBP/bikunin region; it reads PLRPGLDLVFANQPDHSAPLGVTRPSAPPLPHVVDLPQLGPRR. The tract at residues 91–114 is disordered; that stretch reads LGVTRPSAPPLPHVVDLPQLGPRR. The interval 95-104 is interaction with host SRC, HCK, FYN, PIK3R3 and GRB2; it reads RPSAPPLPHV. Residues 96 to 99 carry the PTAP/PSAP motif motif; that stretch reads PSAP.

It belongs to the hepevirus ORF3 protein family. In terms of assembly, forms homooligomers. Interacts with host SRC, HCK, FYN, PIK3R3 and GRB2 (via SH3 domain); binding does not activate the kinases. Interacts with host AMBP/bikunin and AMBP/alpha-1-microglobulin peptides. Interacts with host HPX/hemopexin. Interacts (when phosphorylated) with capsid protein ORF2. Interacts with host TSG101; this interaction plays a role in viral release from the host cell. Interacts with host SIRPA; this interaction down-regulates the phosphorylation of host IRF3. Palmitoylated in the N-terminus.

It is found in the host endoplasmic reticulum membrane. The protein localises to the host cytoplasm. Its subcellular location is the host cytoskeleton. It localises to the virion. The protein resides in the host cell membrane. Small multifunctional phosphoprotein involved in virion morphogenesis, egress and counteracting host innate immunity. Plays critical roles in the final steps of viral release by interacting with host TSG101, a member of the vacuolar protein-sorting pathway and using other cellular host proteins involved in vesicle formation pathway. Also acts as a viroporin and forms ion conductive pores allowing viral particle release. Impairs the generation of type I interferon by down-regulating host TLR3 and TLR7 as well as their downstream signaling pathways. Down-regulates the phosphorylation of host IRF3 via the interaction with host SIRP-alpha, thereby inhibiting IFN-I expression. Interacts with host microtubules. This Homo sapiens (Human) protein is Protein ORF3.